A 182-amino-acid chain; its full sequence is Riboflavin kinase (182 aa).

2 residues coordinate Mg(2+): Thr39 and Asn41. Residue Glu117 is the Nucleophile of the active site.

This sequence belongs to the flavokinase family. It depends on Zn(2+) as a cofactor. Mg(2+) serves as cofactor.

It catalyses the reaction riboflavin + ATP = FMN + ADP + H(+). It participates in cofactor biosynthesis; FMN biosynthesis; FMN from riboflavin (ATP route): step 1/1. Its function is as follows. Catalyzes the phosphorylation of riboflavin (vitamin B2) to form flavin mononucleotide (FMN) coenzyme. The sequence is that of Riboflavin kinase (FMN1) from Lodderomyces elongisporus (strain ATCC 11503 / CBS 2605 / JCM 1781 / NBRC 1676 / NRRL YB-4239) (Yeast).